We begin with the raw amino-acid sequence, 31 residues long: Photosystem II reaction center protein T (31 aa).

A helical membrane pass occupies residues 3–23; sequence ALVYTFLLIGTLGIIFFAIFF.

It belongs to the PsbT family. In terms of assembly, PSII is composed of 1 copy each of membrane proteins PsbA, PsbB, PsbC, PsbD, PsbE, PsbF, PsbH, PsbI, PsbJ, PsbK, PsbL, PsbM, PsbT, PsbY, PsbZ, Psb30/Ycf12, at least 3 peripheral proteins of the oxygen-evolving complex and a large number of cofactors. It forms dimeric complexes.

It localises to the plastid. It is found in the chloroplast thylakoid membrane. Functionally, found at the monomer-monomer interface of the photosystem II (PS II) dimer, plays a role in assembly and dimerization of PSII. PSII is a light-driven water plastoquinone oxidoreductase, using light energy to abstract electrons from H(2)O, generating a proton gradient subsequently used for ATP formation. This Tetradesmus obliquus (Green alga) protein is Photosystem II reaction center protein T.